The following is a 678-amino-acid chain: WD repeat-containing protein 48 (678 aa).

WD repeat units lie at residues 28–67, 73–112, 115–154, 166–205, 208–247, 250–289, 292–334, and 358–452; these read YNRN…QDPY, HHTD…CMST, THKD…ALTA, GNKD…KLMK, GHTD…CIAT, VHDE…IRVL, EEKA…NFRA, and KGGA…GFSS. Positions 608–629 are disordered; that stretch reads LDNESQTTSSSNNEKAGEQEKE. Low complexity predominate over residues 610–621; the sequence is NESQTTSSSNNE.

This sequence belongs to the WD repeat WDR48 family.

The protein localises to the nucleus. It localises to the cytoplasm. Its subcellular location is the lysosome. The protein resides in the late endosome. In terms of biological role, regulator of deubiquitinating complexes, which acts as a strong activator of USP1, USP12 and USP46. Enhances the USP1-mediated deubiquitination of FANCD2; USP1 being almost inactive by itself. Activates deubiquitination by increasing the catalytic turnover without increasing the affinity of deubiquitinating enzymes for the substrate. Also activates deubiquitinating activity of complexes containing USP12. Docks at the distal end of the USP12 fingers domain and induces a cascade of structural changes leading to the activation of the enzyme. Together with RAD51AP1, promotes DNA repair by stimulating RAD51-mediated homologous recombination. Binds single-stranded DNA (ssDNA) and double-stranded DNA (dsDNA). DNA-binding is required both for USP1-mediated deubiquitination of FANCD2 and stimulation of RAD51-mediated homologous recombination: both WDR48/UAF1 and RAD51AP1 have coordinated role in DNA-binding during these processes. Together with ATAD5 and by regulating USP1 activity, has a role in PCNA-mediated translesion synthesis (TLS) by deubiquitinating monoubiquitinated PCNA. Together with ATAD5, has a role in recruiting RAD51 to stalled forks during replication stress. This chain is WD repeat-containing protein 48 (WDR48), found in Gallus gallus (Chicken).